We begin with the raw amino-acid sequence, 664 residues long: Gametogenetin-binding protein 2 (664 aa).

2 disordered regions span residues Gln-375–Glu-425 and Lys-447–Ser-476. The segment covering Glu-376–Lys-388 has biased composition (basic residues). The segment covering Pro-452–Gly-475 has biased composition (polar residues).

It is found in the cytoplasm. Functionally, may be involved in spermatogenesis. This Xenopus laevis (African clawed frog) protein is Gametogenetin-binding protein 2 (ggnbp2).